We begin with the raw amino-acid sequence, 369 residues long: Anhydro-N-acetylmuramic acid kinase (369 aa).

12–19 (GTSMDGVD) provides a ligand contact to ATP.

It belongs to the anhydro-N-acetylmuramic acid kinase family.

It catalyses the reaction 1,6-anhydro-N-acetyl-beta-muramate + ATP + H2O = N-acetyl-D-muramate 6-phosphate + ADP + H(+). It functions in the pathway amino-sugar metabolism; 1,6-anhydro-N-acetylmuramate degradation. It participates in cell wall biogenesis; peptidoglycan recycling. Its function is as follows. Catalyzes the specific phosphorylation of 1,6-anhydro-N-acetylmuramic acid (anhMurNAc) with the simultaneous cleavage of the 1,6-anhydro ring, generating MurNAc-6-P. Is required for the utilization of anhMurNAc either imported from the medium or derived from its own cell wall murein, and thus plays a role in cell wall recycling. The polypeptide is Anhydro-N-acetylmuramic acid kinase (Shewanella baltica (strain OS155 / ATCC BAA-1091)).